The primary structure comprises 415 residues: Gamma-glutamyl phosphate reductase (415 aa).

It belongs to the gamma-glutamyl phosphate reductase family.

It localises to the cytoplasm. It carries out the reaction L-glutamate 5-semialdehyde + phosphate + NADP(+) = L-glutamyl 5-phosphate + NADPH + H(+). It participates in amino-acid biosynthesis; L-proline biosynthesis; L-glutamate 5-semialdehyde from L-glutamate: step 2/2. In terms of biological role, catalyzes the NADPH-dependent reduction of L-glutamate 5-phosphate into L-glutamate 5-semialdehyde and phosphate. The product spontaneously undergoes cyclization to form 1-pyrroline-5-carboxylate. This is Gamma-glutamyl phosphate reductase from Mycolicibacterium vanbaalenii (strain DSM 7251 / JCM 13017 / BCRC 16820 / KCTC 9966 / NRRL B-24157 / PYR-1) (Mycobacterium vanbaalenii).